Consider the following 113-residue polypeptide: Urease subunit beta (113 aa).

Belongs to the urease beta subunit family. Heterotrimer of UreA (gamma), UreB (beta) and UreC (alpha) subunits. Three heterotrimers associate to form the active enzyme.

It is found in the cytoplasm. The enzyme catalyses urea + 2 H2O + H(+) = hydrogencarbonate + 2 NH4(+). It participates in nitrogen metabolism; urea degradation; CO(2) and NH(3) from urea (urease route): step 1/1. The sequence is that of Urease subunit beta from Nitrosospira multiformis (strain ATCC 25196 / NCIMB 11849 / C 71).